The sequence spans 667 residues: Leucine zipper putative tumor suppressor 2 (667 aa).

Low complexity predominate over residues 1–25 (MAIVQTLPVPLEPAPEAATAQQAPA). 3 disordered regions span residues 1–132 (MAIV…PVSG), 150–325 (PVLP…DEAL), and 516–541 (QEAE…PPVP). The required for centrosomal localization stretch occupies residues 1-333 (MAIVQTLPVP…ALLHCVLEGK (333 aa)). Positions 172–181 (PSGSQGSLTQ) are enriched in polar residues. Residues 187–198 (ASSSSSSSSSAA) are compositionally biased toward low complexity. Residues 212–232 (PSGTLSDSGRNSLSSLPTYST) are compositionally biased toward polar residues. The segment covering 241–282 (SPGGHLPSHGPGRGALPGPARGAPTGPSHSDSGRSSSSKSTG) has biased composition (low complexity). A Phosphoserine modification is found at Ser248. Positions 283–294 (SLGGRLAGGLLG) are enriched in gly residues. Ser295 carries the post-translational modification Phosphoserine. Positions 310–321 (SPPPPPPPPPPS) are enriched in pro residues. Positions 329 to 647 (VLEGKLRDRE…LELEARELAD (319 aa)) form a coiled coil. Residues 445–667 (SGEISLLKQQ…CLEEITATEI (223 aa)) are sufficient for interaction with CTNNB1. The tract at residues 448–667 (ISLLKQQLKE…CLEEITATEI (220 aa)) is sufficient for interaction with KATNB1 and for inhibition of katanin-mediated microtubule severing. Over residues 516–526 (QEAERLREKAG) the composition is skewed to basic and acidic residues. Residue Ser568 is modified to Phosphoserine. A Nuclear export signal motif is present at residues 629-638 (LEQELQQLSL).

The protein belongs to the LZTS2 family. In terms of assembly, interacts with KATNB1. Also interacts with CTNNB1, gamma-tubulin and KIF23.

Its subcellular location is the cytoplasm. It is found in the cytoskeleton. The protein localises to the microtubule organizing center. It localises to the centrosome. Functionally, negative regulator of katanin-mediated microtubule severing and release from the centrosome. Required for central spindle formation and the completion of cytokinesis. May negatively regulate axonal outgrowth by preventing the formation of microtubule bundles that are necessary for transport within the elongating axon. Negative regulator of the Wnt signaling pathway. Represses beta-catenin-mediated transcriptional activation by promoting the nuclear exclusion of beta-catenin. The polypeptide is Leucine zipper putative tumor suppressor 2 (Bos taurus (Bovine)).